Reading from the N-terminus, the 490-residue chain is Betaine aldehyde dehydrogenase (490 aa).

K(+)-binding residues include isoleucine 27 and aspartate 93. 150-152 (GAW) is a binding site for NAD(+). The active-site Charge relay system is the lysine 162. 176-179 (KPSE) serves as a coordination point for NAD(+). Valine 180 contributes to the K(+) binding site. Residue 230–233 (GTTT) participates in NAD(+) binding. Leucine 246 contacts K(+). Residue glutamate 252 is the Proton acceptor of the active site. Residues glycine 254, cysteine 286, and glutamate 387 each contribute to the NAD(+) site. The active-site Nucleophile is cysteine 286. Cysteine 286 is modified (cysteine sulfenic acid (-SOH)). Positions 457 and 460 each coordinate K(+). The active-site Charge relay system is glutamate 464.

Belongs to the aldehyde dehydrogenase family. Dimer of dimers. K(+) serves as cofactor.

The catalysed reaction is betaine aldehyde + NAD(+) + H2O = glycine betaine + NADH + 2 H(+). It participates in amine and polyamine biosynthesis; betaine biosynthesis via choline pathway; betaine from betaine aldehyde: step 1/1. Its function is as follows. Involved in the biosynthesis of the osmoprotectant glycine betaine. Catalyzes the irreversible oxidation of betaine aldehyde to the corresponding acid. In Pseudomonas entomophila (strain L48), this protein is Betaine aldehyde dehydrogenase.